The primary structure comprises 317 residues: Glycine--tRNA ligase alpha subunit (317 aa).

The protein belongs to the class-II aminoacyl-tRNA synthetase family. In terms of assembly, tetramer of two alpha and two beta subunits.

Its subcellular location is the cytoplasm. The enzyme catalyses tRNA(Gly) + glycine + ATP = glycyl-tRNA(Gly) + AMP + diphosphate. The polypeptide is Glycine--tRNA ligase alpha subunit (Cupriavidus metallidurans (strain ATCC 43123 / DSM 2839 / NBRC 102507 / CH34) (Ralstonia metallidurans)).